A 1112-amino-acid polypeptide reads, in one-letter code: Lysylphosphatidylglycerol biosynthesis bifunctional protein LysX (1112 aa).

The segment at M1–D613 is phosphatidylglycerol lysyltransferase. 7 consecutive transmembrane segments (helical) span residues V18 to V38, F60 to A80, I84 to L104, V118 to F138, G152 to F172, V209 to F229, and A308 to G328. Residues M614–R1112 are lysine--tRNA ligase. Residues V675 to W748 constitute a DNA-binding region (OB). D1024 and E1031 together coordinate Mg(2+).

It in the N-terminal section; belongs to the LPG synthetase family. This sequence in the C-terminal section; belongs to the class-II aminoacyl-tRNA synthetase family. Mg(2+) serves as cofactor.

The protein localises to the cell membrane. The catalysed reaction is tRNA(Lys) + L-lysine + ATP = L-lysyl-tRNA(Lys) + AMP + diphosphate. The enzyme catalyses L-lysyl-tRNA(Lys) + a 1,2-diacyl-sn-glycero-3-phospho-(1'-sn-glycerol) = a 1,2-diacyl-sn-glycero-3-phospho-1'-(3'-O-L-lysyl)-sn-glycerol + tRNA(Lys). Catalyzes the production of L-lysyl-tRNA(Lys)transfer and the transfer of a lysyl group from L-lysyl-tRNA(Lys) to membrane-bound phosphatidylglycerol (PG), which produces lysylphosphatidylglycerol (LPG), one of the components of the bacterial membrane with a positive net charge. LPG synthesis contributes to the resistance to cationic antimicrobial peptides (CAMPs) and likely protects M.tuberculosis against the CAMPs produced by competiting microorganisms (bacteriocins). In fact, the modification of anionic phosphatidylglycerol with positively charged L-lysine results in repulsion of the peptides. The protein is Lysylphosphatidylglycerol biosynthesis bifunctional protein LysX (lysX) of Mycobacterium sp. (strain KMS).